A 376-amino-acid chain; its full sequence is Ribonucleoside-diphosphate reductase subunit beta (376 aa).

Aspartate 85, glutamate 116, and histidine 119 together coordinate Fe cation. Tyrosine 123 is a catalytic residue. Fe cation is bound by residues glutamate 205, glutamate 239, and histidine 242.

This sequence belongs to the ribonucleoside diphosphate reductase small chain family. Tetramer of two alpha and two beta subunits. Fe cation serves as cofactor.

It carries out the reaction a 2'-deoxyribonucleoside 5'-diphosphate + [thioredoxin]-disulfide + H2O = a ribonucleoside 5'-diphosphate + [thioredoxin]-dithiol. Provides the precursors necessary for DNA synthesis. Catalyzes the biosynthesis of deoxyribonucleotides from the corresponding ribonucleotides. This Buchnera aphidicola subsp. Acyrthosiphon pisum (strain APS) (Acyrthosiphon pisum symbiotic bacterium) protein is Ribonucleoside-diphosphate reductase subunit beta (nrdB).